The chain runs to 755 residues: Xaa-Pro dipeptidyl-peptidase (755 aa).

Catalysis depends on charge relay system residues serine 348, aspartate 468, and histidine 498.

This sequence belongs to the peptidase S15 family. Homodimer.

It is found in the cytoplasm. The catalysed reaction is Hydrolyzes Xaa-Pro-|- bonds to release unblocked, N-terminal dipeptides from substrates including Ala-Pro-|-p-nitroanilide and (sequentially) Tyr-Pro-|-Phe-Pro-|-Gly-Pro-|-Ile.. Its function is as follows. Removes N-terminal dipeptides sequentially from polypeptides having unsubstituted N-termini provided that the penultimate residue is proline. The protein is Xaa-Pro dipeptidyl-peptidase of Streptococcus thermophilus (strain ATCC BAA-491 / LMD-9).